A 245-amino-acid polypeptide reads, in one-letter code: 1-(5-phosphoribosyl)-5-[(5-phosphoribosylamino)methylideneamino] imidazole-4-carboxamide isomerase (245 aa).

Catalysis depends on D8, which acts as the Proton acceptor. The active-site Proton donor is D129.

It belongs to the HisA/HisF family.

The protein resides in the cytoplasm. The enzyme catalyses 1-(5-phospho-beta-D-ribosyl)-5-[(5-phospho-beta-D-ribosylamino)methylideneamino]imidazole-4-carboxamide = 5-[(5-phospho-1-deoxy-D-ribulos-1-ylimino)methylamino]-1-(5-phospho-beta-D-ribosyl)imidazole-4-carboxamide. It functions in the pathway amino-acid biosynthesis; L-histidine biosynthesis; L-histidine from 5-phospho-alpha-D-ribose 1-diphosphate: step 4/9. The chain is 1-(5-phosphoribosyl)-5-[(5-phosphoribosylamino)methylideneamino] imidazole-4-carboxamide isomerase from Pelobacter propionicus (strain DSM 2379 / NBRC 103807 / OttBd1).